The chain runs to 500 residues: Cytochrome P450 2D26 (500 aa).

Position 249 is a phosphoserine (Ser249). Residue Cys446 participates in heme binding.

This sequence belongs to the cytochrome P450 family. It depends on heme as a cofactor.

It is found in the endoplasmic reticulum membrane. Its subcellular location is the microsome membrane. The catalysed reaction is an organic molecule + reduced [NADPH--hemoprotein reductase] + O2 = an alcohol + oxidized [NADPH--hemoprotein reductase] + H2O + H(+). Functionally, cytochromes P450 are a group of heme-thiolate monooxygenases. In liver microsomes, this enzyme is involved in an NADPH-dependent electron transport pathway. It oxidizes a variety of structurally unrelated compounds, including steroids, fatty acids, and xenobiotics. This Mus musculus (Mouse) protein is Cytochrome P450 2D26.